Reading from the N-terminus, the 195-residue chain is Nucleoid occlusion factor SlmA (195 aa).

The HTH tetR-type domain maps to 7–67 (TNRRAQILQA…GLIEFIEETL (61 aa)). The segment at residues 30–49 (TTAKLAEKVGVSEAALYRHF) is a DNA-binding region (H-T-H motif). Residues 109–141 (DALMGEQDRLRARIAKLFERLETQLKQVLRERK) are a coiled coil.

The protein belongs to the nucleoid occlusion factor SlmA family. As to quaternary structure, homodimer. Interacts with FtsZ.

The protein resides in the cytoplasm. It is found in the nucleoid. In terms of biological role, required for nucleoid occlusion (NO) phenomenon, which prevents Z-ring formation and cell division over the nucleoid. Acts as a DNA-associated cell division inhibitor that binds simultaneously chromosomal DNA and FtsZ, and disrupts the assembly of FtsZ polymers. SlmA-DNA-binding sequences (SBS) are dispersed on non-Ter regions of the chromosome, preventing FtsZ polymerization at these regions. This Alteromonas mediterranea (strain DSM 17117 / CIP 110805 / LMG 28347 / Deep ecotype) protein is Nucleoid occlusion factor SlmA.